A 330-amino-acid polypeptide reads, in one-letter code: Autoinducer 2 import system permease protein LsrD (330 aa).

Residues 1 to 4 (MRIR) are Cytoplasmic-facing. A helical membrane pass occupies residues 5-25 (YGWELALAALLVIEIVAFGAI). Topologically, residues 26 to 42 (NPRMLDLNMLLFSTSDF) are periplasmic. A helical membrane pass occupies residues 43–63 (ICIGIVALPLTMVIVSGGIDI). Residues 64-67 (SFGS) lie on the Cytoplasmic side of the membrane. The next 2 membrane-spanning stretches (helical) occupy residues 68-88 (TIGL…PMPL) and 89-109 (AILL…GLII). At 110-115 (YTKVNP) the chain is on the cytoplasmic side. Residues 116-136 (LVITLGTLYLFAGSALLLSGM) traverse the membrane as a helical segment. Over 137-159 (AGATGYEGIGGFPMAFTDFANLD) the chain is Periplasmic. Residues 160-180 (VLGLPVPLIIFLICLLVFWLW) form a helical membrane-spanning segment. Over 181–209 (LHKTHAGRNVFLIGQSPRVAVYSAIPVNR) the chain is Cytoplasmic. Residues 210–230 (TLCALYAMTGLASAVAAVLLV) traverse the membrane as a helical segment. Residues 231 to 237 (SYFGSAR) are Periplasmic-facing. 2 consecutive transmembrane segments (helical) span residues 238 to 258 (SDLG…GGAN) and 259 to 279 (IYGG…VGYL). Over 280 to 285 (QQGLQM) the chain is Periplasmic. The chain crosses the membrane as a helical span at residues 286 to 306 (AGVPNQVSSALSGALLIVVVV). The Cytoplasmic segment spans residues 307 to 330 (GRSVSLHRQQIKEWLARRANNPLP).

The protein belongs to the binding-protein-dependent transport system permease family. AraH/RbsC subfamily. The complex is composed of two ATP-binding proteins (LsrA), two transmembrane proteins (LsrC and LsrD) and a solute-binding protein (LsrB).

It localises to the cell inner membrane. Functionally, part of the ABC transporter complex LsrABCD involved in autoinducer 2 (AI-2) import. Probably responsible for the translocation of the substrate across the membrane. This is Autoinducer 2 import system permease protein LsrD (lsrD) from Escherichia coli (strain SMS-3-5 / SECEC).